The following is a 225-amino-acid chain: Insulin-induced gene 2 protein (225 aa).

Residues 1 to 28 (MAEGETESPGPKKCGPYISSVTSQSVNL) lie on the Cytoplasmic side of the membrane. The helical transmembrane segment at 29–51 (MIRGVVLFFIGVFLALVLNLLQI) threads the bilayer. The Lumenal segment spans residues 52 to 70 (QRNVTLFPPDVIASIFSSA). The helical transmembrane segment at 71–88 (WWVPPCCGTASAVIGLLY) threads the bilayer. Residues 89-103 (PCIDRHLGEPHKFKR) lie on the Cytoplasmic side of the membrane. The chain crosses the membrane as a helical span at residues 104–126 (EWSSVMRCVAVFVGINHASAKVD). At 127-129 (FDN) the chain is on the lumenal side. Residues 130–148 (NIQLSLTLAALSIGLWWTF) traverse the membrane as a helical segment. Residues 149-153 (DRSRS) are Cytoplasmic-facing. S151 bears the Phosphoserine mark. The chain crosses the membrane as a helical span at residues 154–175 (GFGLGVGIAFLATLVTQLLVYN). Residues 176–189 (GVYQYTSPDFLYVR) lie on the Lumenal side of the membrane. A helical membrane pass occupies residues 190–207 (SWLPCIFFAGGITMGNIG). Topologically, residues 208–225 (RQLAMYECKVIAEKSHQE) are cytoplasmic. At C215 the chain carries Cysteine sulfenic acid (-SOH); alternate. A Glycyl cysteine thioester (Cys-Gly) (interchain with G-Cter in ubiquitin); alternate cross-link involves residue C215. Residues 219–225 (AEKSHQE) carry the KxHxx motif.

It belongs to the INSIG family. Interacts with SCAP; interaction is direct and only takes place in the presence of sterols; it prevents interaction between SCAP and the coat protein complex II (COPII). Associates with the SCAP-SREBP complex (composed of SCAP and SREBF1/SREBP1 or SREBF2/SREBP2); association is mediated via its interaction with SCAP and only takes place in the presence of sterols. Interacts with RNF139. Interacts with RNF145. In terms of processing, phosphorylation at Ser-151 by PCK1 reduces binding to oxysterol, disrupting the interaction between INSIG2 and SCAP, thereby promoting nuclear translocation of SREBP proteins (SREBF1/SREBP1 or SREBF2/SREBP2) and subsequent transcription of downstream lipogenesis-related genes. Polyubiquitinated by AMFR/gp78 at Cys-215 in some tissues such as adipose tissues, undifferentiated myoblasts and liver, leading to its degradation. In differentiated myotubes, Cys-215 oxidation prevents ubiquitination at the same site, resulting in protein stabilization. Post-translationally, oxidized at Cys-215 in differentiated myotubes, preventing ubiquitination at the same site, and resulting in protein stabilization.

Its subcellular location is the endoplasmic reticulum membrane. Oxysterol-binding protein that mediates feedback control of cholesterol synthesis by controlling both endoplasmic reticulum to Golgi transport of SCAP and degradation of HMGCR. Acts as a negative regulator of cholesterol biosynthesis by mediating the retention of the SCAP-SREBP complex in the endoplasmic reticulum, thereby blocking the processing of sterol regulatory element-binding proteins (SREBPs) SREBF1/SREBP1 and SREBF2/SREBP2. Binds oxysterol, including 22-hydroxycholesterol, 24-hydroxycholesterol, 25-hydroxycholesterol and 27-hydroxycholesterol, regulating interaction with SCAP and retention of the SCAP-SREBP complex in the endoplasmic reticulum. In presence of oxysterol, interacts with SCAP, retaining the SCAP-SREBP complex in the endoplasmic reticulum, thereby preventing SCAP from escorting SREBF1/SREBP1 and SREBF2/SREBP2 to the Golgi. Sterol deprivation or phosphorylation by PCK1 reduce oxysterol-binding, disrupting the interaction between INSIG2 and SCAP, thereby promoting Golgi transport of the SCAP-SREBP complex, followed by processing and nuclear translocation of SREBF1/SREBP1 and SREBF2/SREBP2. Also regulates cholesterol synthesis by regulating degradation of HMGCR: initiates the sterol-mediated ubiquitin-mediated endoplasmic reticulum-associated degradation (ERAD) of HMGCR via recruitment of the reductase to the ubiquitin ligase RNF139. In Papio anubis (Olive baboon), this protein is Insulin-induced gene 2 protein.